The chain runs to 177 residues: Interleukin-25 (177 aa).

An N-terminal signal peptide occupies residues 1 to 32 (MRERPRLGEDSSLISLFLQVVAFLAMVMGTHT). A disordered region spans residues 58-81 (PVPPLEPARPNRHPESCRASEDGP). Over residues 69–78 (RHPESCRASE) the composition is skewed to basic and acidic residues. Disulfide bonds link cysteine 110–cysteine 168 and cysteine 115–cysteine 170. An N-linked (GlcNAc...) asparagine glycan is attached at asparagine 136.

The protein belongs to the IL-17 family. As to expression, expressed at low levels in several tissues, including brain, kidney, lung, prostate, testis, spinal cord, adrenal gland, and trachea.

It is found in the secreted. In terms of biological role, cytokine produced by various cells such as eosinophils, T-helper type 2 (Th2) cells or epithelial cells that plays a role in internal safety of adaptive immune responses by regulating cytokine production. Promotes and augments T-helper type 2 responses locally or systemically. Exerts its activity via its receptor composed of IL17RA and IL17RB for signal transduction. In turn, stimulates the JAK2-STAT5A pathway and promotes the secretion of type-2 associated cytokines including IL4, IL9 and IL13. Also induces the release of IL8, and IL6 from eosinophils through the combined activation of MAPK and NF-kappa-B pathways. Inhibits the differentiation of T-helper (Th17) cells via the production of IL4, IL5 and IL13. This chain is Interleukin-25 (IL25), found in Homo sapiens (Human).